A 153-amino-acid chain; its full sequence is MSALGFPKTPSDKKALEEGAVFSPRFDPAGLVTVVVTDAEDGMLLMVAHMNAQALALTLETGIAHYWSRSRNALWKKGETSGNFQHVVEMRTDCDQDALWLRVKVLGHDATCHTGRRSCFYRTVGLVDGKGTLVDDGSKPLFDAEFTYRKPSS.

Residue Asp93 participates in Mg(2+) binding. Cys94 serves as a coordination point for Zn(2+). Residues Asp95 and Asp97 each coordinate Mg(2+). Cys112 and Cys119 together coordinate Zn(2+).

Belongs to the PRA-CH family. In terms of assembly, homodimer. The cofactor is Mg(2+). Zn(2+) serves as cofactor.

The protein resides in the cytoplasm. The catalysed reaction is 1-(5-phospho-beta-D-ribosyl)-5'-AMP + H2O = 1-(5-phospho-beta-D-ribosyl)-5-[(5-phospho-beta-D-ribosylamino)methylideneamino]imidazole-4-carboxamide. Its pathway is amino-acid biosynthesis; L-histidine biosynthesis; L-histidine from 5-phospho-alpha-D-ribose 1-diphosphate: step 3/9. In terms of biological role, catalyzes the hydrolysis of the adenine ring of phosphoribosyl-AMP. The protein is Phosphoribosyl-AMP cyclohydrolase of Mesorhizobium japonicum (strain LMG 29417 / CECT 9101 / MAFF 303099) (Mesorhizobium loti (strain MAFF 303099)).